We begin with the raw amino-acid sequence, 155 residues long: 6,7-dimethyl-8-ribityllumazine synthase (155 aa).

5-amino-6-(D-ribitylamino)uracil is bound by residues phenylalanine 23, 57–59 (AFE), and 81–83 (AVI). 86-87 (ST) is a binding site for (2S)-2-hydroxy-3-oxobutyl phosphate. Histidine 89 acts as the Proton donor in catalysis. Residue phenylalanine 114 participates in 5-amino-6-(D-ribitylamino)uracil binding. Residue arginine 128 participates in (2S)-2-hydroxy-3-oxobutyl phosphate binding.

Belongs to the DMRL synthase family.

It carries out the reaction (2S)-2-hydroxy-3-oxobutyl phosphate + 5-amino-6-(D-ribitylamino)uracil = 6,7-dimethyl-8-(1-D-ribityl)lumazine + phosphate + 2 H2O + H(+). Its pathway is cofactor biosynthesis; riboflavin biosynthesis; riboflavin from 2-hydroxy-3-oxobutyl phosphate and 5-amino-6-(D-ribitylamino)uracil: step 1/2. Functionally, catalyzes the formation of 6,7-dimethyl-8-ribityllumazine by condensation of 5-amino-6-(D-ribitylamino)uracil with 3,4-dihydroxy-2-butanone 4-phosphate. This is the penultimate step in the biosynthesis of riboflavin. This chain is 6,7-dimethyl-8-ribityllumazine synthase, found in Geobacter sp. (strain M21).